A 62-amino-acid chain; its full sequence is Kininogen-1 (62 aa).

The first 22 residues, 1–22, serve as a signal peptide directing secretion; the sequence is MDILKKSLFLVLFLGLVSFSIC. The interval 24-62 is disordered; that stretch reads EEKRDTEEEENDDEIEEESEEKKREAPERPPGFTPFRIY. Over residues 30 to 42 the composition is skewed to acidic residues; the sequence is EEEENDDEIEEES. Residue Pro54 is modified to 4-hydroxyproline; partial. Position 62 is a sulfotyrosine (Tyr62).

The protein belongs to the frog skin active peptide (FSAP) family. Bradykinin-related peptide subfamily. In terms of tissue distribution, expressed by the skin glands.

It is found in the secreted. Functionally, inhibits ACE with a Ki of 1.6 uM, and targets B2 bradykinin receptor (BDKRB2). Provokes contraction of smooth muscle preparation (ileum). In vivo, induces an early hyperalgesic effects in living rats after intraplantar injection. The sequence is that of Kininogen-1 from Phyllomedusa sauvagei (Sauvage's leaf frog).